The sequence spans 628 residues: MSQIFSFAGENDFYRRGAIYPNPKDASLLLSLGSFADVYFPPSKRSRVVAPTIFSAFEKKPVSIDVLPDECLFEIFRRLSGPQERSACAFVSKQWLTLVSSIRQKEIDVPSKITEDGDDCEGCLSRSLDGKKATDVRLAAIAVGTAGRGGLGKLSIRGSNSAKVSDLGLRSIGRSCPSLGSLSLWNVSTITDNGLLEIAEGCAQLEKLELNRCSTITDKGLVAIAKSCPNLTELTLEACSRIGDEGLLAIARSCSKLKSVSIKNCPLVRDQGIASLLSNTTCSLAKLKLQMLNVTDVSLAVVGHYGLSITDLVLAGLSHVSEKGFWVMGNGVGLQKLNSLTITACQGVTDMGLESVGKGCPNMKKAIISKSPLLSDNGLVSFAKASLSLESLQLEECHRVTQFGFFGSLLNCGEKLKAFSLVNCLSIRDLTTGLPASSHCSALRSLSIRNCPGFGDANLAAIGKLCPQLEDIDLCGLKGITESGFLHLIQSSLVKINFSGCSNLTDRVISAITARNGWTLEVLNIDGCSNITDASLVSIAANCQILSDLDISKCAISDSGIQALASSDKLKLQILSVAGCSMVTDKSLPAIVGLGSTLLGLNLQQCRSISNSTVDFLVERLYKCDILS.

Residues 61–109 (PVSIDVLPDECLFEIFRRLSGPQERSACAFVSKQWLTLVSSIRQKEIDV) enclose the F-box domain.

As to quaternary structure, part of a SCF (SKP1-cullin-F-box) protein ligase complex. Interacts with CUL1, SKP1A/ASK1, SKP1B/ASK2, ASK11, ASK12, ASK13, ASK18, EIN3, and EIL1. As to expression, ubiquitous.

The protein localises to the nucleus. It participates in protein modification; protein ubiquitination. Functionally, component of SCF(EBF1) E3 ubiquitin ligase complexes, which may mediate the ubiquitination and subsequent proteasomal degradation of target proteins (probably including EIN3 and EIL1). Regulator of the ethylene signaling cascade by modulating the stability of EIN3 and EIL1 proteins. Confers insensitivity to ethylene. The protein is EIN3-binding F-box protein 1 (EBF1) of Arabidopsis thaliana (Mouse-ear cress).